A 487-amino-acid chain; its full sequence is Serralysin (487 aa).

Positions 1 to 16 are excised as a propeptide; that stretch reads MQSTKKAIEITESNFA. A Zn(2+)-binding site is contributed by His192. Glu193 is an active-site residue. Zn(2+) is bound by residues His196, His202, and Tyr232. The Ca(2+) site is built by Arg269, Gly271, Thr273, Asp301, Gly303, Gly304, Asp306, Thr343, Glu345, Gly350, Gly352, Asp354, Asn359, Ala361, Asn363, Gly367, Gly368, Ala369, Asp372, Gly376, Gly377, Gly378, Gly379, Asp381, Gly385, Gly386, Ala387, Gly388, Asp390, Asp399, Asp406, and Asp416. Hemolysin-type calcium-binding repeat units follow at residues 348 to 365 and 366 to 383; these read IGGS…NNVL and KGGA…ADEL.

Belongs to the peptidase M10B family. Ca(2+) serves as cofactor. Requires Zn(2+) as cofactor.

The protein localises to the secreted. It carries out the reaction Preferential cleavage of bonds with hydrophobic residues in P1'.. Functionally, naturally present in the silkworm intestine and allows the emerging moth to dissolve its cocoon. The protein is Serralysin of Serratia marcescens (strain ATCC 21074 / E-15).